Reading from the N-terminus, the 598-residue chain is Arginine--tRNA ligase (598 aa).

A 'HIGH' region motif is present at residues 131 to 141 (ANPTGPMHVGH). A disordered region spans residues 288–309 (KLPPPKSKKGQPPPQPQPDEEG).

It belongs to the class-I aminoacyl-tRNA synthetase family. As to quaternary structure, monomer.

Its subcellular location is the cytoplasm. The enzyme catalyses tRNA(Arg) + L-arginine + ATP = L-arginyl-tRNA(Arg) + AMP + diphosphate. This is Arginine--tRNA ligase from Anaeromyxobacter dehalogenans (strain 2CP-1 / ATCC BAA-258).